Reading from the N-terminus, the 371-residue chain is Cytochrome b (371 aa).

4 consecutive transmembrane segments (helical) span residues Phe25–Val45, Trp69–Ile90, Trp105–Leu125, and Phe170–Met190. Heme b-binding residues include His75 and His89. The heme b site is built by His174 and His188. His193 serves as a coordination point for a ubiquinone. Helical transmembrane passes span Tyr218 to Phe238, Leu280 to His300, Ile312 to Thr332, and Phe339 to Pro358.

Belongs to the cytochrome b family. The cytochrome bc1 complex contains 3 respiratory subunits (MT-CYB, CYC1 and UQCRFS1), 2 core proteins (UQCRC1 and UQCRC2) and probably 6 low-molecular weight proteins. It depends on heme b as a cofactor.

The protein localises to the mitochondrion inner membrane. Its function is as follows. Component of the ubiquinol-cytochrome c reductase complex (complex III or cytochrome b-c1 complex) that is part of the mitochondrial respiratory chain. The b-c1 complex mediates electron transfer from ubiquinol to cytochrome c. Contributes to the generation of a proton gradient across the mitochondrial membrane that is then used for ATP synthesis. The protein is Cytochrome b (MT-CYB) of Eryx colubrinus loveridgei.